The following is a 455-amino-acid chain: DENN domain-containing protein 11 (455 aa).

Val-2 is subject to N-acetylvaline. Residues 15-187 form the uDENN domain; the sequence is EGPAVSVPQD…QLEMPGHYSH (173 aa). Positions 21 to 61 are disordered; that stretch reads VPQDPALQAGGWVRGGSGGGRVAAEAPRRREPEEPAPPEVL. Over residues 32 to 41 the composition is skewed to gly residues; that stretch reads WVRGGSGGGR. At Arg-41 the chain carries Omega-N-methylarginine. Residues 214–362 form the cDENN domain; it reads WLPSIHRYMY…LNSADREKYR (149 aa). The region spanning 364–455 is the dDENN domain; that stretch reads LNEQRQMLLY…MLVIDNPCCP (92 aa).

Belongs to the DENND11 family. As to expression, expressed within the somatodendritic compartment of neurons, is also present on dendritic growth cones, but is not found in astrocytes.

Probable guanine nucleotide exchange factor (GEF). May promote the exchange of GDP to GTP, converting inactive GDP-bound small GTPases into their active GTP-bound form. May play a role in neuritogenesis, as well as in neuronal recovery and/or restructuring in the hippocampus following transient cerebral ischemia. The chain is DENN domain-containing protein 11 (Dennd11) from Rattus norvegicus (Rat).